Consider the following 728-residue polypeptide: 1,4-alpha-glucan branching enzyme GlgB (728 aa).

Residue Asp-405 is the Nucleophile of the active site. Glu-458 functions as the Proton donor in the catalytic mechanism.

This sequence belongs to the glycosyl hydrolase 13 family. GlgB subfamily. As to quaternary structure, monomer.

The enzyme catalyses Transfers a segment of a (1-&gt;4)-alpha-D-glucan chain to a primary hydroxy group in a similar glucan chain.. It functions in the pathway glycan biosynthesis; glycogen biosynthesis. Functionally, catalyzes the formation of the alpha-1,6-glucosidic linkages in glycogen by scission of a 1,4-alpha-linked oligosaccharide from growing alpha-1,4-glucan chains and the subsequent attachment of the oligosaccharide to the alpha-1,6 position. The sequence is that of 1,4-alpha-glucan branching enzyme GlgB from Citrobacter koseri (strain ATCC BAA-895 / CDC 4225-83 / SGSC4696).